Reading from the N-terminus, the 199-residue chain is NAD(P)H dehydrogenase (quinone) (199 aa).

A Flavodoxin-like domain is found at 4–190; sequence VLVLYYSAYG…DAARFQGAHV (187 aa). Residues 10–15 and 78–80 contribute to the FMN site; these read SAYGHI and TRY. Position 12 (Tyr-12) interacts with NAD(+). Trp-98 lines the substrate pocket. Residues 113 to 119 and His-134 each bind FMN; that span reads SSATQHG.

Belongs to the WrbA family. FMN serves as cofactor.

The enzyme catalyses a quinone + NADH + H(+) = a quinol + NAD(+). It catalyses the reaction a quinone + NADPH + H(+) = a quinol + NADP(+). The sequence is that of NAD(P)H dehydrogenase (quinone) from Sinorhizobium fredii (strain NBRC 101917 / NGR234).